The following is a 283-amino-acid chain: 2-dehydro-3-deoxyphosphooctonate aldolase (283 aa).

This sequence belongs to the KdsA family.

It is found in the cytoplasm. The enzyme catalyses D-arabinose 5-phosphate + phosphoenolpyruvate + H2O = 3-deoxy-alpha-D-manno-2-octulosonate-8-phosphate + phosphate. The protein operates within carbohydrate biosynthesis; 3-deoxy-D-manno-octulosonate biosynthesis; 3-deoxy-D-manno-octulosonate from D-ribulose 5-phosphate: step 2/3. Its pathway is bacterial outer membrane biogenesis; lipopolysaccharide biosynthesis. The chain is 2-dehydro-3-deoxyphosphooctonate aldolase from Vibrio parahaemolyticus serotype O3:K6 (strain RIMD 2210633).